The primary structure comprises 68 residues: Large ribosomal subunit protein uL29 (68 aa).

The protein belongs to the universal ribosomal protein uL29 family.

In Bradyrhizobium diazoefficiens (strain JCM 10833 / BCRC 13528 / IAM 13628 / NBRC 14792 / USDA 110), this protein is Large ribosomal subunit protein uL29.